A 483-amino-acid polypeptide reads, in one-letter code: Uroporphyrinogen-III C-methyltransferase (483 aa).

Belongs to the precorrin methyltransferase family.

The catalysed reaction is uroporphyrinogen III + 2 S-adenosyl-L-methionine = precorrin-2 + 2 S-adenosyl-L-homocysteine + H(+). In Bacillus subtilis (strain 168), this protein is Uroporphyrinogen-III C-methyltransferase (nasF).